A 562-amino-acid polypeptide reads, in one-letter code: Probable Xaa-Pro aminopeptidase PEPP (562 aa).

Aspartate 358, aspartate 369, glutamate 492, and glutamate 532 together coordinate Mn(2+).

Belongs to the peptidase M24B family. Mn(2+) serves as cofactor.

It catalyses the reaction Release of any N-terminal amino acid, including proline, that is linked to proline, even from a dipeptide or tripeptide.. Its function is as follows. Catalyzes the removal of a penultimate prolyl residue from the N-termini of peptides. The protein is Probable Xaa-Pro aminopeptidase PEPP (PEPP) of Leptosphaeria maculans (strain JN3 / isolate v23.1.3 / race Av1-4-5-6-7-8) (Blackleg fungus).